The following is a 411-amino-acid chain: NAD-dependent dihydropyrimidine dehydrogenase subunit PreA (411 aa).

Substrate contacts are provided by residues asparagine 76 and 134–136 (NFS). Cysteine 137 (nucleophile) is an active-site residue. 201–202 (NT) lines the substrate pocket. 4Fe-4S ferredoxin-type domains lie at 335 to 367 (VYPRINLDKCVGCGRCYISCYDGGHQAMEWSEK) and 369 to 398 (RTPHCNTEKCVGCLLCGHVCPVGCIELGEV). Positions 344, 347, 350, 354, 378, 381, 384, and 388 each coordinate [4Fe-4S] cluster.

It belongs to the dihydropyrimidine dehydrogenase family. Heterotetramer of 2 PreA and 2 PreT subunits. [4Fe-4S] cluster serves as cofactor.

It carries out the reaction 5,6-dihydrouracil + NAD(+) = uracil + NADH + H(+). The enzyme catalyses 5,6-dihydrothymine + NAD(+) = thymine + NADH + H(+). In terms of biological role, involved in pyrimidine base degradation. Catalyzes physiologically the reduction of uracil to 5,6-dihydrouracil (DHU) by using NADH as a specific cosubstrate. It also catalyzes the reverse reaction and the reduction of thymine to 5,6-dihydrothymine (DHT). The sequence is that of NAD-dependent dihydropyrimidine dehydrogenase subunit PreA (preA) from Escherichia coli O157:H7.